Here is a 174-residue protein sequence, read N- to C-terminus: ATP synthase subunit b, organellar chromatophore (174 aa).

Residues 26 to 46 (LINLIIVIGVLFTFLRGFLGE) form a helical membrane-spanning segment.

It belongs to the ATPase B chain family. As to quaternary structure, F-type ATPases have 2 components, F(1) - the catalytic core - and F(0) - the membrane proton channel. F(1) has five subunits: alpha(3), beta(3), gamma(1), delta(1), epsilon(1). F(0) has four main subunits: a(1), b(1), b'(1) and c(10-14). The alpha and beta chains form an alternating ring which encloses part of the gamma chain. F(1) is attached to F(0) by a central stalk formed by the gamma and epsilon chains, while a peripheral stalk is formed by the delta, b and b' chains.

Its subcellular location is the plastid. It localises to the organellar chromatophore thylakoid membrane. Functionally, f(1)F(0) ATP synthase produces ATP from ADP in the presence of a proton or sodium gradient. F-type ATPases consist of two structural domains, F(1) containing the extramembraneous catalytic core and F(0) containing the membrane proton channel, linked together by a central stalk and a peripheral stalk. During catalysis, ATP synthesis in the catalytic domain of F(1) is coupled via a rotary mechanism of the central stalk subunits to proton translocation. Its function is as follows. Component of the F(0) channel, it forms part of the peripheral stalk, linking F(1) to F(0). The sequence is that of ATP synthase subunit b, organellar chromatophore from Paulinella chromatophora.